A 518-amino-acid chain; its full sequence is ATP synthase F(1) complex catalytic subunit beta, mitochondrial (518 aa).

Residues G199, V200, G201, K202, T203, and V204 each coordinate ADP. Residue G199 coordinates ATP. 5 residues coordinate phosphate: G199, V200, G201, K202, and T203. 4 residues coordinate ATP: G201, K202, T203, and V204. T203 provides a ligand contact to Mg(2+). Mg(2+) is bound at residue E228. R229 provides a ligand contact to ATP.

It belongs to the ATPase alpha/beta chains family. Homotrimer. Component of the ATP synthase complex composed at least of ATP5F1A/subunit alpha, ATP5F1B/subunit beta, ATP5MC1/subunit c (homooctomer), MT-ATP6/subunit a, MT-ATP8/subunit 8, ATP5ME/subunit e, ATP5MF/subunit f, ATP5MG/subunit g, ATP5MK/subunit k, ATP5MJ/subunit j, ATP5F1C/subunit gamma, ATP5F1D/subunit delta, ATP5F1E/subunit epsilon, ATP5PF/subunit F6, ATP5PB/subunit b, ATP5PD/subunit d, ATP5PO/subunit OSCP. ATP synthase complex consists of a soluble F(1) head domain (subunits alpha(3) and beta(3)) - the catalytic core - and a membrane F(0) domain - the membrane proton channel (subunits c, a, 8, e, f, g, k and j). These two domains are linked by a central stalk (subunits gamma, delta, and epsilon) rotating inside the F1 region and a stationary peripheral stalk (subunits F6, b, d, and OSCP).

It localises to the mitochondrion inner membrane. It carries out the reaction ATP + H2O + 4 H(+)(in) = ADP + phosphate + 5 H(+)(out). Catalytic subunit beta, of the mitochondrial membrane ATP synthase complex (F(1)F(0) ATP synthase or Complex V) that produces ATP from ADP in the presence of a proton gradient across the membrane which is generated by electron transport complexes of the respiratory chain. ATP synthase complex consist of a soluble F(1) head domain - the catalytic core - and a membrane F(1) domain - the membrane proton channel. These two domains are linked by a central stalk rotating inside the F(1) region and a stationary peripheral stalk. During catalysis, ATP synthesis in the catalytic domain of F(1) is coupled via a rotary mechanism of the central stalk subunits to proton translocation. In vivo, can only synthesize ATP although its ATP hydrolase activity can be activated artificially in vitro. With the subunit alpha (ATP5F1A), forms the catalytic core in the F(1) domain. The protein is ATP synthase F(1) complex catalytic subunit beta, mitochondrial of Cyprinus carpio (Common carp).